A 189-amino-acid chain; its full sequence is UPF0301 protein Cgl3084/cg3414 (189 aa).

The protein belongs to the UPF0301 (AlgH) family.

This is UPF0301 protein Cgl3084/cg3414 from Corynebacterium glutamicum (strain ATCC 13032 / DSM 20300 / JCM 1318 / BCRC 11384 / CCUG 27702 / LMG 3730 / NBRC 12168 / NCIMB 10025 / NRRL B-2784 / 534).